The primary structure comprises 87 residues: MSERAERKTRIGKVTSNKMEKTVVVAVESRIQHPLYGRTVKKTKKFKAHDEENACQIGDVVEIMETRPLSKEKRWRVVRIVEKAVIV.

Belongs to the universal ribosomal protein uS17 family. As to quaternary structure, part of the 30S ribosomal subunit.

One of the primary rRNA binding proteins, it binds specifically to the 5'-end of 16S ribosomal RNA. The polypeptide is Small ribosomal subunit protein uS17 (Heliobacterium modesticaldum (strain ATCC 51547 / Ice1)).